The primary structure comprises 457 residues: Reticulophagy regulator 3 (457 aa).

Residues M1 to C24 are disordered. 3 helical membrane-spanning segments follow: residues F80–I100, P165–Y185, and I186–I206. Polar residues predominate over residues E291–T305. Disordered stretches follow at residues E291–T351 and A410–Q457. Basic and acidic residues predominate over residues D310–P326. The segment covering L428–D441 has biased composition (acidic residues). Positions D435–L440 match the LIR motif motif. The segment covering S443–Q457 has biased composition (polar residues).

This sequence belongs to the RETREG family. In terms of assembly, interacts with ATG8 family modifier proteins.

It is found in the endoplasmic reticulum membrane. Endoplasmic reticulum (ER)-anchored autophagy regulator which exists in an inactive state under basal conditions but is activated following cellular stress. When activated, induces ER fragmentation and mediates ER delivery into lysosomes through sequestration into autophagosomes via interaction with ATG8 family proteins. Promotes ER membrane curvature and ER tubulation required for subsequent ER fragmentation and engulfment into autophagosomes. The sequence is that of Reticulophagy regulator 3 (retreg3) from Xenopus tropicalis (Western clawed frog).